Here is a 295-residue protein sequence, read N- to C-terminus: sn-glycerol-3-phosphate transport system permease protein UgpA (295 aa).

Over 1–11 the chain is Cytoplasmic; the sequence is MSSSRPVFRSR. The chain crosses the membrane as a helical span at residues 12–32; it reads WLPYLLVAPQLVITVIFFIWP. Residues 33 to 80 lie on the Periplasmic side of the membrane; sequence AGEALWYSLQSVDPFGFSSQFVGLENFVALFHDSYYLDAFWTTIKFSA. The ABC transmembrane type-1 domain occupies 76 to 284; sequence IKFSALVTFS…FLVIILTVVQ (209 aa). The chain crosses the membrane as a helical span at residues 81 to 101; it reads LVTFSGLLVSLFFAALVDYVV. The Cytoplasmic segment spans residues 102-109; it reads RGSRFYQT. A helical transmembrane segment spans residues 110-130; the sequence is LMLLPYAVAPAVAAVLWIFLF. Residues 131-157 lie on the Periplasmic side of the membrane; the sequence is NPGRGLITHFLGEFGYDWNHAQNSGQA. Residues 158-178 form a helical membrane-spanning segment; that stretch reads MFLVVFASVWKQISYNFLFFF. Over 179–207 the chain is Cytoplasmic; sequence AALQSIPRSLVEAAAIDGAGPIRRFFRLS. Residues 208–228 form a helical membrane-spanning segment; sequence LPLIAPVSFFLLVVNLVYAFF. Residues 229-262 are Periplasmic-facing; the sequence is DTFPVIDAATAGGPVQATTTLIYKIYCEGFTGLD. A helical transmembrane segment spans residues 263 to 283; that stretch reads LSASAAQSVVLMFLVIILTVV. The Cytoplasmic segment spans residues 284–295; it reads QFRYVESKVRYQ.

This sequence belongs to the binding-protein-dependent transport system permease family. UgpAE subfamily. In terms of assembly, the complex is composed of two ATP-binding proteins (UgpC), two transmembrane proteins (UgpA and UgpE) and a solute-binding protein (UgpB).

It localises to the cell inner membrane. Its function is as follows. Part of the ABC transporter complex UgpBAEC involved in sn-glycerol-3-phosphate (G3P) import. Probably responsible for the translocation of the substrate across the membrane. The polypeptide is sn-glycerol-3-phosphate transport system permease protein UgpA (ugpA) (Salmonella typhi).